Consider the following 198-residue polypeptide: Chromophore lyase CpcT/CpeT 3 (198 aa).

Belongs to the CpcT/CpeT biliprotein lyase family.

Functionally, covalently attaches a chromophore to Cys residue(s) of phycobiliproteins. This chain is Chromophore lyase CpcT/CpeT 3, found in Synechococcus sp. (strain JA-3-3Ab) (Cyanobacteria bacterium Yellowstone A-Prime).